Reading from the N-terminus, the 354-residue chain is Replication factor C subunit 3 (354 aa).

41 to 48 (GPSGSGKK) is an ATP binding site.

Belongs to the activator 1 small subunits family. As to quaternary structure, heterotetramer of subunits RFC2, RFC3, RFC4 and RFC5 that can form a complex with RFC1.

The protein localises to the nucleus. Its function is as follows. May be involved in DNA replication and thus regulate cell proliferation. In Arabidopsis thaliana (Mouse-ear cress), this protein is Replication factor C subunit 3 (RFC3).